A 290-amino-acid chain; its full sequence is Phosphatidylglycerol--prolipoprotein diacylglyceryl transferase (290 aa).

7 consecutive transmembrane segments (helical) span residues 21–41, 60–80, 96–116, 124–144, 198–218, 225–245, and 260–280; these read VALH…MWLA, LLYA…VLFY, WDGG…MVIF, FFQV…AGRL, SQLY…NLFI, GSVS…VEFF, and ISMG…MMIW. R143 provides a ligand contact to a 1,2-diacyl-sn-glycero-3-phospho-(1'-sn-glycerol).

This sequence belongs to the Lgt family.

It is found in the cell inner membrane. It carries out the reaction L-cysteinyl-[prolipoprotein] + a 1,2-diacyl-sn-glycero-3-phospho-(1'-sn-glycerol) = an S-1,2-diacyl-sn-glyceryl-L-cysteinyl-[prolipoprotein] + sn-glycerol 1-phosphate + H(+). Its pathway is protein modification; lipoprotein biosynthesis (diacylglyceryl transfer). In terms of biological role, catalyzes the transfer of the diacylglyceryl group from phosphatidylglycerol to the sulfhydryl group of the N-terminal cysteine of a prolipoprotein, the first step in the formation of mature lipoproteins. This Enterobacter sp. (strain 638) protein is Phosphatidylglycerol--prolipoprotein diacylglyceryl transferase.